We begin with the raw amino-acid sequence, 476 residues long: Siroheme synthase (476 aa).

Residues 1–207 (MTANALFPLF…QRHAEAEAVL (207 aa)) are precorrin-2 dehydrogenase /sirohydrochlorin ferrochelatase. NAD(+)-binding positions include 25 to 26 (KV) and 46 to 47 (PS). Residue Ser-132 is modified to Phosphoserine. The interval 220–476 (GSVTLVGAGA…SAPCPPARIL (257 aa)) is uroporphyrinogen-III C-methyltransferase. Asp-252 (proton acceptor) is an active-site residue. Residue Lys-274 is the Proton donor of the active site. S-adenosyl-L-methionine-binding positions include 305–307 (GGD), Val-310, 335–336 (TA), Met-387, and Gly-416.

The protein in the N-terminal section; belongs to the precorrin-2 dehydrogenase / sirohydrochlorin ferrochelatase family. It in the C-terminal section; belongs to the precorrin methyltransferase family.

The catalysed reaction is uroporphyrinogen III + 2 S-adenosyl-L-methionine = precorrin-2 + 2 S-adenosyl-L-homocysteine + H(+). It carries out the reaction precorrin-2 + NAD(+) = sirohydrochlorin + NADH + 2 H(+). The enzyme catalyses siroheme + 2 H(+) = sirohydrochlorin + Fe(2+). Its pathway is cofactor biosynthesis; adenosylcobalamin biosynthesis; precorrin-2 from uroporphyrinogen III: step 1/1. The protein operates within cofactor biosynthesis; adenosylcobalamin biosynthesis; sirohydrochlorin from precorrin-2: step 1/1. It functions in the pathway porphyrin-containing compound metabolism; siroheme biosynthesis; precorrin-2 from uroporphyrinogen III: step 1/1. It participates in porphyrin-containing compound metabolism; siroheme biosynthesis; siroheme from sirohydrochlorin: step 1/1. Its pathway is porphyrin-containing compound metabolism; siroheme biosynthesis; sirohydrochlorin from precorrin-2: step 1/1. Functionally, multifunctional enzyme that catalyzes the SAM-dependent methylations of uroporphyrinogen III at position C-2 and C-7 to form precorrin-2 via precorrin-1. Then it catalyzes the NAD-dependent ring dehydrogenation of precorrin-2 to yield sirohydrochlorin. Finally, it catalyzes the ferrochelation of sirohydrochlorin to yield siroheme. The polypeptide is Siroheme synthase (Xylella fastidiosa (strain M12)).